Here is a 102-residue protein sequence, read N- to C-terminus: uncharacterized protein (102 aa).

This is an uncharacterized protein from Methanothermococcus thermolithotrophicus (Methanococcus thermolithotrophicus).